The following is a 46-amino-acid chain: MRLHTGEKPYQCLHCDRHFVQVANLRRHLRVHTGERPYACEICPSR.

3 C2H2-type zinc fingers span residues 1 to 4 (MRLH), 10 to 32 (YQCL…LRVH), and 38 to 46 (YACEICPSR).

It belongs to the krueppel C2H2-type zinc-finger protein family.

It localises to the nucleus. In terms of biological role, krueppel is a gap class segmentation protein. The protein is Protein krueppel (Kr) of Pholcus phalangioides (Longbodied cellar spider).